Reading from the N-terminus, the 298-residue chain is Bifunctional protein FolD (298 aa).

NADP(+) contacts are provided by residues 166–168, serine 191, and isoleucine 232; that span reads GRS.

This sequence belongs to the tetrahydrofolate dehydrogenase/cyclohydrolase family. Homodimer.

It catalyses the reaction (6R)-5,10-methylene-5,6,7,8-tetrahydrofolate + NADP(+) = (6R)-5,10-methenyltetrahydrofolate + NADPH. The enzyme catalyses (6R)-5,10-methenyltetrahydrofolate + H2O = (6R)-10-formyltetrahydrofolate + H(+). It participates in one-carbon metabolism; tetrahydrofolate interconversion. Catalyzes the oxidation of 5,10-methylenetetrahydrofolate to 5,10-methenyltetrahydrofolate and then the hydrolysis of 5,10-methenyltetrahydrofolate to 10-formyltetrahydrofolate. In Maricaulis maris (strain MCS10) (Caulobacter maris), this protein is Bifunctional protein FolD.